Consider the following 174-residue polypeptide: Secretory-abundant heat soluble protein 68234 (174 aa).

Residues 1–19 (MARFLVALALFGVVAMTAA) form the signal peptide. Positions 26 to 57 (EWSGKPWLGKFVAEVTDKSENWEAFVDALGLP) are SAHS-c1. The segment at 72-100 (YKQGDHYHHIFALPDKNFEKDIEFTLGQE) is SAHS-c2. The interval 113 to 162 (KYSEDGEKLVADVSIPTKGKTIRSEYEVQGDQLIKTYKTGDIVAKKWFKK) is SAHS-c3.

This sequence belongs to the Secretory-abundant heat soluble protein (SAHS) family.

It localises to the secreted. Secreted heat soluble protein acting as a molecular shield in water-deficient condition. Tardigrade-specific intrinsically disordered proteins (TDPs) are essential for desiccation tolerance by forming non-crystalline amorphous solids upon desiccation, and this vitrified state mirrors their protective capabilities. The polypeptide is Secretory-abundant heat soluble protein 68234 (Hypsibius exemplaris (Freshwater tardigrade)).